The following is a 471-amino-acid chain: Histidinol dehydrogenase (471 aa).

NAD(+) contacts are provided by tyrosine 139, glutamine 204, and asparagine 236. 3 residues coordinate substrate: threonine 259, glutamine 281, and histidine 284. Positions 281 and 284 each coordinate Zn(2+). Active-site proton acceptor residues include glutamate 350 and histidine 351. Positions 351, 384, 438, and 443 each coordinate substrate. Aspartate 384 provides a ligand contact to Zn(2+). Histidine 443 contacts Zn(2+).

This sequence belongs to the histidinol dehydrogenase family. It depends on Zn(2+) as a cofactor.

The enzyme catalyses L-histidinol + 2 NAD(+) + H2O = L-histidine + 2 NADH + 3 H(+). Its pathway is amino-acid biosynthesis; L-histidine biosynthesis; L-histidine from 5-phospho-alpha-D-ribose 1-diphosphate: step 9/9. Catalyzes the sequential NAD-dependent oxidations of L-histidinol to L-histidinaldehyde and then to L-histidine. This chain is Histidinol dehydrogenase, found in Bifidobacterium longum (strain NCC 2705).